We begin with the raw amino-acid sequence, 283 residues long: 4-diphosphocytidyl-2-C-methyl-D-erythritol kinase (283 aa).

The active site involves Lys-10. Residue 99-109 (PMGGGLGGGSS) participates in ATP binding. Asp-141 is an active-site residue.

This sequence belongs to the GHMP kinase family. IspE subfamily. In terms of assembly, homodimer.

It catalyses the reaction 4-CDP-2-C-methyl-D-erythritol + ATP = 4-CDP-2-C-methyl-D-erythritol 2-phosphate + ADP + H(+). It participates in isoprenoid biosynthesis; isopentenyl diphosphate biosynthesis via DXP pathway; isopentenyl diphosphate from 1-deoxy-D-xylulose 5-phosphate: step 3/6. In terms of biological role, catalyzes the phosphorylation of the position 2 hydroxy group of 4-diphosphocytidyl-2C-methyl-D-erythritol. This Shigella boydii serotype 18 (strain CDC 3083-94 / BS512) protein is 4-diphosphocytidyl-2-C-methyl-D-erythritol kinase.